We begin with the raw amino-acid sequence, 69 residues long: DNA-directed RNA polymerase subunit omega (69 aa).

The protein belongs to the RNA polymerase subunit omega family. The RNAP catalytic core consists of 2 alpha, 1 beta, 1 beta' and 1 omega subunit. When a sigma factor is associated with the core the holoenzyme is formed, which can initiate transcription.

It carries out the reaction RNA(n) + a ribonucleoside 5'-triphosphate = RNA(n+1) + diphosphate. In terms of biological role, promotes RNA polymerase assembly. Latches the N- and C-terminal regions of the beta' subunit thereby facilitating its interaction with the beta and alpha subunits. The protein is DNA-directed RNA polymerase subunit omega of Geobacter metallireducens (strain ATCC 53774 / DSM 7210 / GS-15).